We begin with the raw amino-acid sequence, 508 residues long: Cobyric acid synthase (508 aa).

In terms of domain architecture, GATase cobBQ-type spans 249-451 (EVDVAIINLP…IHGIFENSLF (203 aa)). C330 functions as the Nucleophile in the catalytic mechanism. H443 is an active-site residue.

Belongs to the CobB/CobQ family. CobQ subfamily.

The protein operates within cofactor biosynthesis; adenosylcobalamin biosynthesis. Catalyzes amidations at positions B, D, E, and G on adenosylcobyrinic A,C-diamide. NH(2) groups are provided by glutamine, and one molecule of ATP is hydrogenolyzed for each amidation. The polypeptide is Cobyric acid synthase (Caldanaerobacter subterraneus subsp. tengcongensis (strain DSM 15242 / JCM 11007 / NBRC 100824 / MB4) (Thermoanaerobacter tengcongensis)).